The sequence spans 523 residues: Acetyl-coenzyme A carboxylase carboxyl transferase subunit beta, chloroplastic (523 aa).

The 300-residue stretch at 224-523 (FWVICENCHK…FVPSNQNSIK (300 aa)) folds into the CoA carboxyltransferase N-terminal domain. Zn(2+) contacts are provided by Cys228, Cys231, Cys247, and Cys250. A C4-type zinc finger spans residues 228 to 250 (CENCHKFNYKRLFKSKMNICEEC).

It belongs to the AccD/PCCB family. Acetyl-CoA carboxylase is a heterohexamer composed of biotin carboxyl carrier protein, biotin carboxylase and 2 subunits each of ACCase subunit alpha and ACCase plastid-coded subunit beta (accD). Zn(2+) is required as a cofactor.

The protein localises to the plastid. It localises to the chloroplast stroma. It carries out the reaction N(6)-carboxybiotinyl-L-lysyl-[protein] + acetyl-CoA = N(6)-biotinyl-L-lysyl-[protein] + malonyl-CoA. The protein operates within lipid metabolism; malonyl-CoA biosynthesis; malonyl-CoA from acetyl-CoA: step 1/1. Its function is as follows. Component of the acetyl coenzyme A carboxylase (ACC) complex. Biotin carboxylase (BC) catalyzes the carboxylation of biotin on its carrier protein (BCCP) and then the CO(2) group is transferred by the transcarboxylase to acetyl-CoA to form malonyl-CoA. In Cucumis sativus (Cucumber), this protein is Acetyl-coenzyme A carboxylase carboxyl transferase subunit beta, chloroplastic.